We begin with the raw amino-acid sequence, 382 residues long: Lipid-A-disaccharide synthase (382 aa).

The protein belongs to the LpxB family.

It carries out the reaction 2-N,3-O-bis[(3R)-3-hydroxytetradecanoyl]-alpha-D-glucosaminyl 1-phosphate + UDP-2-N,3-O-bis[(3R)-3-hydroxytetradecanoyl]-alpha-D-glucosamine = lipid A disaccharide (E. coli) + UDP + H(+). The catalysed reaction is a lipid X + a UDP-2-N,3-O-bis[(3R)-3-hydroxyacyl]-alpha-D-glucosamine = a lipid A disaccharide + UDP + H(+). The protein operates within glycolipid biosynthesis; lipid IV(A) biosynthesis; lipid IV(A) from (3R)-3-hydroxytetradecanoyl-[acyl-carrier-protein] and UDP-N-acetyl-alpha-D-glucosamine: step 5/6. Its function is as follows. Condensation of UDP-2,3-diacylglucosamine and 2,3-diacylglucosamine-1-phosphate to form lipid A disaccharide, a precursor of lipid A, a phosphorylated glycolipid that anchors the lipopolysaccharide to the outer membrane of the cell. The chain is Lipid-A-disaccharide synthase from Escherichia fergusonii (strain ATCC 35469 / DSM 13698 / CCUG 18766 / IAM 14443 / JCM 21226 / LMG 7866 / NBRC 102419 / NCTC 12128 / CDC 0568-73).